The sequence spans 472 residues: MADDTSNDAGQKASSAMWGGRFSAGPSAVMEAINASIDIDQRMADQDIDGSLAHSRMLAATGVISSADAAAIQRGLEQVRSEIHAGDFPWSKALEDVHMNVEARLKEIIGEPAGRLHTARSRNDQVATDFRLWLRDACDRIDAMLAAYQTALVKQAETHADQVMPGFTHLQTAQPVSLGHHLLSYVEVAQRDRGRFADARKRLNESPLGCAALAGTAFPIDREMTASDLGFDRPMANSLDGVAARDFALEVLSAASICAVNLSRFAEEIVLWCTRRFGFATLSDAWSTGSSIMPQKRNPDAAELVRAKPGRIIGSLTGLLTVVKGLPLAYSKDLQEDKAPVFQAIDDLELALLSMAGMAGDLSFFPEALEEAAGEAYSDATDLADYVVRELGKPFRDAHHISGSIVKLAEARGVPLAELSLAEMQSVEPAIDETVFSVLSARASMMSRTSFGGTSPIRVREQVAIWKDRLGC.

Belongs to the lyase 1 family. Argininosuccinate lyase subfamily.

The protein resides in the cytoplasm. It catalyses the reaction 2-(N(omega)-L-arginino)succinate = fumarate + L-arginine. The protein operates within amino-acid biosynthesis; L-arginine biosynthesis; L-arginine from L-ornithine and carbamoyl phosphate: step 3/3. This Maricaulis maris (strain MCS10) (Caulobacter maris) protein is Argininosuccinate lyase.